The chain runs to 441 residues: C-terminal-binding protein 1 (441 aa).

The tract at residues 1-70 is interaction with GLIS2 1; the sequence is MGSSHLLNKG…EIHEKVLNEA (70 aa). Residues Ser100, 180–185, Asp204, 237–243, 264–266, and Asp290 contribute to the NAD(+) site; these read IGLGRV, CGLNEHN, and TAR. Arg266 is a catalytic residue. Residues 288–360 are interaction with GLIS2 2; sequence ALDVHESEPF…VNKDHLTAAT (73 aa). Residue Glu295 is part of the active site. Phosphoserine is present on Ser300. The active-site Proton donor is the His315. 315–318 is a binding site for NAD(+); the sequence is HAAW. The disordered stretch occupies residues 409–441; sequence SHGLPPVAHPPHAPSPGQTVKPEADRDHTSDQL. A Phosphoserine modification is found at Ser423. Lys429 is covalently cross-linked (Glycyl lysine isopeptide (Lys-Gly) (interchain with G-Cter in SUMO)). A compositionally biased stretch (basic and acidic residues) spans 430–441; it reads PEADRDHTSDQL.

The protein belongs to the D-isomer specific 2-hydroxyacid dehydrogenase family. Homo- or heterodimer. Heterodimer with CTBP2. Interacts with ELK3 (via its PXDLS motif). Interacts with RBBP8 (via its PXDLS motif). Interacts with PNN, MECOM and ZFHX1B. Interacts with ZNF366 (via PXDLS motif). Interaction with SATB1 (non-acetylated form); the interaction stabilizes its attachment to DNA and promotes transcription repression. Interacts with PRDM16; the interaction represses white adipose tissue (WAT)-specific genes expression. Interacts with GLIS2, HIPK2, FOXP1, FOXP2, HDAC4, HDAC5, HDAC9, NRIP1, WIZ and ZNF217. Interacts with BCL6; the interaction is required for BCL6 transcriptional autoinhibition and inhibition of some BCL6 target genes. Interacts with IKZF4. Interacts with MCRIP1 (unphosphorylated form, via the PXDLS motif); competitively inhibiting CTBP-ZEB1 interaction. Interacts with Bassoon/BSN; this interaction targets and anchors CTBP1 to presynapses. Interacts with SIMC1. It depends on NAD(+) as a cofactor. Post-translationally, ADP-ribosylated; when cells are exposed to brefeldin A. In terms of processing, the level of phosphorylation appears to be regulated during the cell cycle. Phosphorylation by HIPK2 on Ser-423 induces proteasomal degradation. Sumoylation on Lys-429 is promoted by the E3 SUMO-protein ligase CBX4. In terms of tissue distribution, expressed in a wide range of adult tissues.

It localises to the cytoplasm. It is found in the nucleus. Functionally, corepressor targeting diverse transcription regulators such as GLIS2 or BCL6. Has dehydrogenase activity. Involved in controlling the equilibrium between tubular and stacked structures in the Golgi complex. Functions in brown adipose tissue (BAT) differentiation. This chain is C-terminal-binding protein 1 (Ctbp1), found in Mus musculus (Mouse).